The primary structure comprises 80 residues: Exodeoxyribonuclease 7 small subunit (80 aa).

The protein belongs to the XseB family. Heterooligomer composed of large and small subunits.

It localises to the cytoplasm. The catalysed reaction is Exonucleolytic cleavage in either 5'- to 3'- or 3'- to 5'-direction to yield nucleoside 5'-phosphates.. Bidirectionally degrades single-stranded DNA into large acid-insoluble oligonucleotides, which are then degraded further into small acid-soluble oligonucleotides. The chain is Exodeoxyribonuclease 7 small subunit from Rickettsia canadensis (strain McKiel).